The chain runs to 544 residues: MGDCVAPKEDLIFRSKLPDIYIPKHLPLHTYCFENISKVGDKSCLINGATGETFTYSQVELLSRKVASGLNKLGIQQGDTIMLLLPNSPEYFFAFLGASYRGAISTMANPFFTSAEVIKQLKASQAKLIITQACYVDKVKDYAAEKNIQIICIDDAPQDCLHFSKLMEADESEMPEVVINSDDVVALPYSSGTTGLPKGVMLTHKGLVTSVAQQVDGDNPNLYMHSEDVMICILPLFHIYSLNAVLCCGLRAGVTILIMQKFDIVPFLELIQKYKVTIGPFVPPIVLAIAKSPVVDKYDLSSVRTVMSGAAPLGKELEDAVRAKFPNAKLGQGYGMTEAGPVLAMCLAFAKEPYEIKSGACGTVVRNAEMKIVDPETNASLPRNQRGEICIRGDQIMKGYLNDPESTRTTIDEEGWLHTGDIGFIDDDDELFIVDRLKEIIKYKGFQVAPAELEALLLTHPTISDAAVVPMIDEKAGEVPVAFVVRTNGFTTTEEEIKQFVSKQVVFYKRIFRVFFVDAIPKSPSGKILRKDLRARIASGDLPK.

Serine 190, serine 191, glycine 192, threonine 193, threonine 194, and lysine 198 together coordinate ATP. Tyrosine 240 is a binding site for (E)-4-coumaroyl-AMP. Lysine 261 is a CoA binding site. Positions 263 to 332 (DIVPFLELIQ…AKFPNAKLGQ (70 aa)) are SBD1. Positions 310, 332, 333, 337, and 345 each coordinate (E)-4-coumaroyl-AMP. Positions 332, 333, and 337 each coordinate ATP. The interval 333 to 400 (GYGMTEAGPV…IRGDQIMKGY (68 aa)) is SBD2. Residues aspartate 421 and arginine 436 each contribute to the ATP site. (E)-4-coumaroyl-AMP is bound by residues lysine 438 and lysine 442. 2 residues coordinate CoA: lysine 444 and glycine 445. Lysine 527 provides a ligand contact to ATP.

The protein belongs to the ATP-dependent AMP-binding enzyme family. It depends on Mg(2+) as a cofactor.

It carries out the reaction (E)-4-coumarate + ATP + CoA = (E)-4-coumaroyl-CoA + AMP + diphosphate. The enzyme catalyses (E)-4-coumarate + ATP + H(+) = (E)-4-coumaroyl-AMP + diphosphate. It catalyses the reaction (E)-4-coumaroyl-AMP + CoA = (E)-4-coumaroyl-CoA + AMP + H(+). The protein operates within phytoalexin biosynthesis; 3,4',5-trihydroxystilbene biosynthesis; 3,4',5-trihydroxystilbene from trans-4-coumarate: step 1/2. In terms of biological role, carboxylate--CoA ligase that may use 4-coumarate as substrate. Follows a two-step reaction mechanism, wherein the carboxylate substrate first undergoes adenylation by ATP, followed by a thioesterification in the presence of CoA to yield the final CoA thioester. The protein is 4-coumarate--CoA ligase 1 (4CL1) of Petroselinum crispum (Parsley).